A 260-amino-acid chain; its full sequence is 33 kDa inner dynein arm light chain, axonemal (260 aa).

The segment at 1-66 is disordered; the sequence is MIPPNASLVK…PVESQKAQQT (66 aa). Residues 177–260 adopt a coiled-coil conformation; that stretch reads MRKALQAEQG…LEGIIAPNKK (84 aa).

It belongs to the inner dynein arm light chain family. Post-translationally, may undergo some post-translational modifications that shift its mobility on SDS gels.

Functionally, may play a dynamic role in flagellar motility. This Strongylocentrotus purpuratus (Purple sea urchin) protein is 33 kDa inner dynein arm light chain, axonemal.